A 126-amino-acid chain; its full sequence is Alpha-1-purothionin (126 aa).

Positions 1–16 (CLLILGLVLEQLQVEG) are cleaved as a signal peptide. Cystine bridges form between Cys-19–Cys-55, Cys-20–Cys-47, Cys-28–Cys-45, and Cys-32–Cys-41. The propeptide at 62–126 (LALESNSDEP…DAGLPSLDAY (65 aa)) is acidic domain.

It belongs to the plant thionin (TC 1.C.44) family. 4 C-C subfamily.

The protein localises to the secreted. Thionins are small plant proteins which are toxic to animal cells. They seem to exert their toxic effect at the level of the cell membrane. Their precise function is not known. The protein is Alpha-1-purothionin (THI1.1) of Triticum aestivum (Wheat).